The following is a 307-amino-acid chain: MSENQQALNHVVSMEDLTVDQVMKLIKRGIEFKNGAQLPYEDHPIVSNLFFEDSTRTHKSFEVAEIKLGLERLDFDVKTSSVNKGETLYDTILTLSALGVDVCVIRHPEVDYYRELIASPTITTSIINGGDGSGQHPSQSLLDLMTIYEEFGHFEGLKVAIAGDLDHSRVAKSNMQILKRLGSELFFAGPEEWRSQEFADYGQFVTIDEIIDQVDVMMFLRVQHERHDSGAVFSKEDYHAQHGLTQERYDRLKETAILMHPAPINRDVEIADHLVEAPKSRIVQQMTNGVFVRMAILESVLASRNAN.

2 residues coordinate carbamoyl phosphate: Arg-56 and Thr-57. Lys-84 lines the L-aspartate pocket. Residues Arg-106, His-136, and Gln-139 each coordinate carbamoyl phosphate. The L-aspartate site is built by Arg-169 and Arg-221. Ala-262 and Pro-263 together coordinate carbamoyl phosphate.

It belongs to the aspartate/ornithine carbamoyltransferase superfamily. ATCase family. Heterododecamer (2C3:3R2) of six catalytic PyrB chains organized as two trimers (C3), and six regulatory PyrI chains organized as three dimers (R2).

The catalysed reaction is carbamoyl phosphate + L-aspartate = N-carbamoyl-L-aspartate + phosphate + H(+). Its pathway is pyrimidine metabolism; UMP biosynthesis via de novo pathway; (S)-dihydroorotate from bicarbonate: step 2/3. In terms of biological role, catalyzes the condensation of carbamoyl phosphate and aspartate to form carbamoyl aspartate and inorganic phosphate, the committed step in the de novo pyrimidine nucleotide biosynthesis pathway. The protein is Aspartate carbamoyltransferase catalytic subunit of Streptococcus pneumoniae (strain P1031).